Here is a 313-residue protein sequence, read N- to C-terminus: MPLALCCMSHSPLLNLPGPSAELLDQITDAIADARKFVEQFDPELVVTFSPDHYNGFFYRLMPPFCIGTAAAGVGDYGTYQGPLPVDADIANACAESLWESGVDIAISTAMDVDHGTVQPLQELFGDATARPVVPIFINSVATPLGPLSRSRALGAAVGTFLATLDKRVLIVGSGGLSHDPPVPTLATAPPAALDRIVHGAPMTPEQRMARQEAVIKAAHDFAHGQSPLRSLNPDWDRSLLEIFDEGRLSDLDGWTNTFITGEGGNSAHEIRTWVAAFAALAAHGEYQTGNHFYRAAPELIAGFAIRTAVPST.

Residue H115 is the Proton donor of the active site. The active-site Proton acceptor is H179.

Belongs to the LigB/MhpB extradiol dioxygenase family. As to quaternary structure, homotetramer. Fe(2+) is required as a cofactor.

It catalyses the reaction 3-(2,3-dihydroxyphenyl)propanoate + O2 = (2Z,4E)-2-hydroxy-6-oxonona-2,4-dienedioate + H(+). It carries out the reaction (2E)-3-(2,3-dihydroxyphenyl)prop-2-enoate + O2 = (2Z,4E,7E)-2-hydroxy-6-oxonona-2,4,7-trienedioate + H(+). It functions in the pathway aromatic compound metabolism; 3-phenylpropanoate degradation. Functionally, catalyzes the non-heme iron(II)-dependent oxidative cleavage of 2,3-dihydroxyphenylpropionic acid and 2,3-dihydroxicinnamic acid into 2-hydroxy-6-ketononadienedioate and 2-hydroxy-6-ketononatrienedioate, respectively. The protein is 2,3-dihydroxyphenylpropionate/2,3-dihydroxicinnamic acid 1,2-dioxygenase of Mycolicibacterium smegmatis (strain ATCC 700084 / mc(2)155) (Mycobacterium smegmatis).